The following is a 172-amino-acid chain: Achaete-scute homolog 4 (172 aa).

A bHLH domain is found at 72–124 (AFLRKRNERERQRVRCVNEGYARLRDHLPRELADKRLSKVETLRAAIDYIKHL). The disordered stretch occupies residues 144 to 172 (QRRAECNSDGESKASSAPSPSSEPEEGGS). Residues 145-155 (RRAECNSDGES) are compositionally biased toward basic and acidic residues. Residues 156–165 (KASSAPSPSS) are compositionally biased toward low complexity.

Expressed in skin. 7-fold higher expression in fetal skin than in adult skin. Weak expression also detected in fetal lung, aorta and brain, and in adult stomach, kidney, ovary and breast.

Its subcellular location is the nucleus. Its function is as follows. Could be a transcriptional regulator involved in skin development. This is Achaete-scute homolog 4 (ASCL4) from Homo sapiens (Human).